Consider the following 87-residue polypeptide: Cell division topological specificity factor (87 aa).

This sequence belongs to the MinE family.

Prevents the cell division inhibition by proteins MinC and MinD at internal division sites while permitting inhibition at polar sites. This ensures cell division at the proper site by restricting the formation of a division septum at the midpoint of the long axis of the cell. The polypeptide is Cell division topological specificity factor (Acidiphilium cryptum (strain JF-5)).